The following is an 814-amino-acid chain: G-type lectin S-receptor-like serine/threonine-protein kinase At1g61370 (814 aa).

Residues 1-25 form the signal peptide; it reads MGKIGIVFFASLLFLLIIFPSCAFA. The region spanning 26–145 is the Bulb-type lectin domain; the sequence is AITRASPLSI…VSERNLWESF (120 aa). Residues 26–433 are Extracellular-facing; the sequence is AITRASPLSI…SELAGSNRVK (408 aa). N-linked (GlcNAc...) asparagine glycans are attached at residues Asn-43, Asn-54, Asn-89, Asn-95, Asn-253, and Asn-271. The 37-residue stretch at 282–318 folds into the EGF-like domain; sequence PVSSCDVYNTCGPFGLCIRSNPPKCECLKGFVPKSDE. 2 disulfides stabilise this stretch: Cys-286–Cys-298 and Cys-292–Cys-306. Asn-324, Asn-334, Asn-340, and Asn-383 each carry an N-linked (GlcNAc...) asparagine glycan. One can recognise a PAN domain in the interval 337–423; that stretch reads CDVNSSATAQ…GETLSIRLAS (87 aa). 2 disulfide bridges follow: Cys-376–Cys-397 and Cys-380–Cys-386. A helical membrane pass occupies residues 434–454; that stretch reads IIVASIVSISVFMILVFASYW. At 455–814 the chain is on the cytoplasmic side; the sequence is YWRYKAKQND…NITQTAIVGR (360 aa). Positions 501–786 constitute a Protein kinase domain; that stretch reads FSMENKLGQG…DLPKPKQPVF (286 aa). ATP-binding positions include 507 to 515 and Lys-529; that span reads LGQGGFGPV. A phosphoserine mark is found at Ser-535 and Ser-550. A caM-binding region spans residues 590-607; the sequence is TKKLELDWPKRFEIIQGI. Residue Asp-626 is the Proton acceptor of the active site. A phosphoserine mark is found at Ser-630 and Ser-643. Position 660 is a phosphothreonine (Thr-660). Phosphoserine occurs at positions 703, 704, 797, and 802. Position 809 is a phosphothreonine (Thr-809).

It belongs to the protein kinase superfamily. Ser/Thr protein kinase family.

Its subcellular location is the cell membrane. The catalysed reaction is L-seryl-[protein] + ATP = O-phospho-L-seryl-[protein] + ADP + H(+). The enzyme catalyses L-threonyl-[protein] + ATP = O-phospho-L-threonyl-[protein] + ADP + H(+). This Arabidopsis thaliana (Mouse-ear cress) protein is G-type lectin S-receptor-like serine/threonine-protein kinase At1g61370.